Reading from the N-terminus, the 102-residue chain is NADH-quinone oxidoreductase subunit K (102 aa).

The next 3 helical transmembrane spans lie at 5–25 (LSHF…GIIL), 30–50 (IIVV…NLVS), and 62–82 (VFSL…LAIL).

This sequence belongs to the complex I subunit 4L family. NDH-1 is composed of 14 different subunits. Subunits NuoA, H, J, K, L, M, N constitute the membrane sector of the complex.

Its subcellular location is the cell inner membrane. The enzyme catalyses a quinone + NADH + 5 H(+)(in) = a quinol + NAD(+) + 4 H(+)(out). In terms of biological role, NDH-1 shuttles electrons from NADH, via FMN and iron-sulfur (Fe-S) centers, to quinones in the respiratory chain. The immediate electron acceptor for the enzyme in this species is believed to be ubiquinone. Couples the redox reaction to proton translocation (for every two electrons transferred, four hydrogen ions are translocated across the cytoplasmic membrane), and thus conserves the redox energy in a proton gradient. This is NADH-quinone oxidoreductase subunit K from Methylocella silvestris (strain DSM 15510 / CIP 108128 / LMG 27833 / NCIMB 13906 / BL2).